Consider the following 84-residue polypeptide: Small ribosomal subunit protein eS27 (84 aa).

The C4-type zinc-finger motif lies at 38–60 (CPKCGATTTTFSHAHRQILCQKC).

It belongs to the eukaryotic ribosomal protein eS27 family. As to quaternary structure, component of the small ribosomal subunit. It depends on Zn(2+) as a cofactor.

The protein localises to the cytoplasm. Its function is as follows. Component of the small ribosomal subunit. The ribosome is a large ribonucleoprotein complex responsible for the synthesis of proteins in the cell. Required for proper rRNA processing and maturation of 18S rRNAs. The polypeptide is Small ribosomal subunit protein eS27 (RPS27) (Entamoeba histolytica (strain ATCC 30459 / HM-1:IMSS / ABRM)).